The primary structure comprises 387 residues: Alpha-maltose-1-phosphate synthase (387 aa).

This sequence belongs to the glycosyltransferase group 1 family.

The catalysed reaction is ADP-alpha-D-glucose + alpha-D-glucose 1-phosphate = alpha-maltose 1-phosphate + ADP + H(+). The protein operates within glycan biosynthesis; glycogen biosynthesis. Its function is as follows. Involved in the biosynthesis of the maltose-1-phosphate (M1P) building block required for alpha-glucan production by the key enzyme GlgE. Catalyzes the formation of an alpha-1,4 linkage between glucose from ADP-glucose and glucose 1-phosphate (G1P) to yield maltose-1-phosphate (M1P). This is Alpha-maltose-1-phosphate synthase from Mycolicibacterium smegmatis (strain ATCC 700084 / mc(2)155) (Mycobacterium smegmatis).